The sequence spans 104 residues: Urease subunit gamma (104 aa).

The protein belongs to the urease gamma subunit family. In terms of assembly, heterotrimer of UreA (gamma), UreB (beta) and UreC (alpha) subunits. Three heterotrimers associate to form the active enzyme.

The protein localises to the cytoplasm. The enzyme catalyses urea + 2 H2O + H(+) = hydrogencarbonate + 2 NH4(+). It participates in nitrogen metabolism; urea degradation; CO(2) and NH(3) from urea (urease route): step 1/1. The chain is Urease subunit gamma from Actinomyces naeslundii.